We begin with the raw amino-acid sequence, 311 residues long: Heme A synthase (311 aa).

Residues 1–6 lie on the Cytoplasmic side of the membrane; the sequence is MQRFIK. Residues 7–27 traverse the membrane as a helical segment; it reads WLAVITSLDLLIVLLGGALVT. Residues 28–62 are Extracellular-facing; that stretch reads KTGSGQGCGKSWPLCNGEFVPSNLSMETIIELSHR. A disulfide bond links cysteine 35 and cysteine 42. The active site involves glutamate 58. Position 61 (histidine 61) interacts with heme o. A helical transmembrane segment spans residues 63 to 83; sequence LTSGSAGILVTLLCILSWKYY. Over 84 to 91 the chain is Cytoplasmic; sequence KHVRETKT. The chain crosses the membrane as a helical span at residues 92–112; it reads LAILSFVFLVAQALMGAAAVV. At 113–121 the chain is on the extracellular side; it reads WGQMPAVLA. Residues 122–142 traverse the membrane as a helical segment; it reads IHFGISLISFASVILLTCLIF. Histidine 123 lines the heme o pocket. The Cytoplasmic portion of the chain corresponds to 143-159; it reads EIDQKFDARSLIMDKKM. A helical transmembrane segment spans residues 160–180; the sequence is KFHIYGVTIYSYIVVYTGALV. The Extracellular portion of the chain corresponds to 181-211; that stretch reads RHERASLACPDFPLCSKNRPMPTQLHEWVQM. Cysteine 189 and cysteine 195 are oxidised to a cystine. The helical transmembrane segment at 212–232 threads the bilayer; it reads GHRVAAMLIFAWILYAMILAI. Position 213 (histidine 213) interacts with heme b. Residues 233 to 243 are Cytoplasmic-facing; sequence RHYKQQPVVYW. Residues 244–264 form a helical membrane-spanning segment; sequence GWIISFILVTLQAIVGILVVF. Over 265–271 the chain is Extracellular; it reads TNASLSM. Residues 272–292 form a helical membrane-spanning segment; that stretch reads ALLHSLFISCLFAVLCYLVML. Histidine 275 provides a ligand contact to heme b. The Cytoplasmic segment spans residues 293–311; sequence GTRSKVNAKEAASTSKQTK.

It belongs to the COX15/CtaA family. Type 1 subfamily. As to quaternary structure, interacts with CtaB. The cofactor is heme b.

It is found in the cell membrane. It carries out the reaction Fe(II)-heme o + 2 A + H2O = Fe(II)-heme a + 2 AH2. Its pathway is porphyrin-containing compound metabolism; heme A biosynthesis; heme A from heme O: step 1/1. Catalyzes the conversion of heme O to heme A by two successive hydroxylations of the methyl group at C8. The first hydroxylation forms heme I, the second hydroxylation results in an unstable dihydroxymethyl group, which spontaneously dehydrates, resulting in the formyl group of heme A. This Bacillus cereus (strain ATCC 10987 / NRS 248) protein is Heme A synthase.